The sequence spans 310 residues: Aspartate carbamoyltransferase catalytic subunit (310 aa).

Carbamoyl phosphate is bound by residues Arg-58 and Thr-59. Lys-86 lines the L-aspartate pocket. Carbamoyl phosphate is bound by residues Arg-108, His-136, and Gln-139. L-aspartate-binding residues include Arg-169 and Arg-224. Residues Gly-265 and Pro-266 each contribute to the carbamoyl phosphate site.

It belongs to the aspartate/ornithine carbamoyltransferase superfamily. ATCase family. Heterododecamer (2C3:3R2) of six catalytic PyrB chains organized as two trimers (C3), and six regulatory PyrI chains organized as three dimers (R2).

It catalyses the reaction carbamoyl phosphate + L-aspartate = N-carbamoyl-L-aspartate + phosphate + H(+). Its pathway is pyrimidine metabolism; UMP biosynthesis via de novo pathway; (S)-dihydroorotate from bicarbonate: step 2/3. Functionally, catalyzes the condensation of carbamoyl phosphate and aspartate to form carbamoyl aspartate and inorganic phosphate, the committed step in the de novo pyrimidine nucleotide biosynthesis pathway. This Citrifermentans bemidjiense (strain ATCC BAA-1014 / DSM 16622 / JCM 12645 / Bem) (Geobacter bemidjiensis) protein is Aspartate carbamoyltransferase catalytic subunit.